A 411-amino-acid polypeptide reads, in one-letter code: Meiotic driver wtf33 (411 aa).

The interval 1–95 is disordered; the sequence is MKNKYYPLRS…ENHSSGTADN (95 aa). Basic and acidic residues predominate over residues 11 to 29; the sequence is SMDELSTKNDNEIDLEKGP. Residues 57-72 show a composition bias toward polar residues; it reads GANNPNLFNTDESTTP. 6 helical membrane-spanning segments follow: residues 104–124, 137–157, 244–264, 281–301, 303–323, and 336–356; these read AILS…YLTY, WVYF…LWCF, EMMI…FGCV, TISA…WTLW, ALSG…LVNG, and GYEI…LYEM.

Belongs to the WTF family. In terms of assembly, homomer. Forms protein aggregates. The two isoforms can interact with each other and with themselves. High sequence similarity is required for their interaction.

It is found in the spore membrane. Its subcellular location is the vacuole membrane. The protein localises to the ascus epiplasm. It localises to the cytoplasm. The protein resides in the endoplasmic reticulum membrane. Functionally, promotes unequal transmission of alleles from the parental zygote to progeny spores by acting as poison/antidote system where the poison and antidote proteins are produced from the same locus; the poison component is trans-acting and targets all spores within an ascus whereas the antidote component is spore-specific, leading to poisoning of all progeny that do not inherit the allele. Localizes isoform 2 to the vacuole thereby facilitating its degradation. Its function is as follows. Forms toxic aggregates that disrupt spore maturation. The sequence is that of Meiotic driver wtf33 from Schizosaccharomyces kambucha (Fission yeast).